Consider the following 64-residue polypeptide: Large ribosomal subunit protein bL35 (64 aa).

It belongs to the bacterial ribosomal protein bL35 family.

The chain is Large ribosomal subunit protein bL35 from Carboxydothermus hydrogenoformans (strain ATCC BAA-161 / DSM 6008 / Z-2901).